We begin with the raw amino-acid sequence, 198 residues long: Nicotinamidase 3 (198 aa).

The protein belongs to the isochorismatase family.

It carries out the reaction nicotinamide + H2O = nicotinate + NH4(+). Its pathway is cofactor biosynthesis; nicotinate biosynthesis; nicotinate from nicotinamide: step 1/1. In terms of biological role, catalyzes the deamidation of nicotinamide, an early step in the NAD(+) salvage pathway. Prevents the accumulation of intracellular nicotinamide, a known inhibitor of poly(ADP-ribose) polymerases (PARP enzymes). This Arabidopsis thaliana (Mouse-ear cress) protein is Nicotinamidase 3.